Consider the following 369-residue polypeptide: Endo-1,4-beta-xylanase A (369 aa).

The signal sequence occupies residues M1–A20. In terms of domain architecture, GH10 spans Q21–L367. Catalysis depends on E156, which acts as the Proton donor. E261 acts as the Nucleophile in catalysis.

This sequence belongs to the glycosyl hydrolase 10 (cellulase F) family.

It catalyses the reaction Endohydrolysis of (1-&gt;4)-beta-D-xylosidic linkages in xylans.. Its pathway is glycan degradation; xylan degradation. This Xylanibacter ruminicola (Prevotella ruminicola) protein is Endo-1,4-beta-xylanase A (xynA).